Reading from the N-terminus, the 195-residue chain is Peroxiredoxin (195 aa).

Positions 4–162 constitute a Thioredoxin domain; sequence AMIGKPAPEF…TLRLVQAFQF (159 aa). Catalysis depends on Cys49, which acts as the Cysteine sulfenic acid (-SOH) intermediate.

It belongs to the peroxiredoxin family. AhpC/Prx1 subfamily. In terms of assembly, homodimer; disulfide-linked, upon oxidation.

It carries out the reaction a hydroperoxide + [thioredoxin]-dithiol = an alcohol + [thioredoxin]-disulfide + H2O. Functionally, thiol-specific peroxidase that catalyzes the reduction of hydrogen peroxide and organic hydroperoxides to water and alcohols, respectively. Plays a role in cell protection against oxidative stress by detoxifying peroxides and as sensor of hydrogen peroxide-mediated signaling events. This chain is Peroxiredoxin, found in Ascaris suum (Pig roundworm).